A 653-amino-acid polypeptide reads, in one-letter code: Choline transporter-like protein 3 (653 aa).

A helical membrane pass occupies residues 34 to 54 (WLFLFFLFWTGLVFIMGYSVV). 2 N-linked (GlcNAc...) asparagine glycosylation sites follow: N136 and N151. Helical transmembrane passes span 213-233 (DTIL…MFTF), 243-263 (IFIS…WWLY), 284-304 (VLGF…LIFV), 334-354 (LWTF…LLSL), and 384-404 (LIGL…TIAG). Residues N412, N503, and N521 are each glycosylated (N-linked (GlcNAc...) asparagine). A run of 2 helical transmembrane segments spans residues 534 to 554 (FIIF…GLMA) and 563 to 583 (VWAV…HSFL). The segment at 632 to 653 (RAQQDKHSLRNEEGTELQAIVR) is disordered. Residues 634–644 (QQDKHSLRNEE) are compositionally biased toward basic and acidic residues.

This sequence belongs to the CTL (choline transporter-like) family.

The protein resides in the membrane. The sequence is that of Choline transporter-like protein 3 (SLC44A3) from Homo sapiens (Human).